The following is a 588-amino-acid chain: Adenine deaminase (588 aa).

This sequence belongs to the metallo-dependent hydrolases superfamily. Adenine deaminase family. As to quaternary structure, homodimer. It depends on Mn(2+) as a cofactor.

It carries out the reaction adenine + H2O + H(+) = hypoxanthine + NH4(+). In Escherichia coli O9:H4 (strain HS), this protein is Adenine deaminase.